Reading from the N-terminus, the 105-residue chain is Ribosomal silencing factor RsfS (105 aa).

Belongs to the Iojap/RsfS family. As to quaternary structure, interacts with ribosomal protein uL14 (rplN).

The protein localises to the cytoplasm. Functions as a ribosomal silencing factor. Interacts with ribosomal protein uL14 (rplN), blocking formation of intersubunit bridge B8. Prevents association of the 30S and 50S ribosomal subunits and the formation of functional ribosomes, thus repressing translation. In Escherichia coli O6:H1 (strain CFT073 / ATCC 700928 / UPEC), this protein is Ribosomal silencing factor RsfS.